The following is a 251-amino-acid chain: V-set and transmembrane domain-containing protein 2B (251 aa).

An N-terminal signal peptide occupies residues 1–25; the sequence is MEKQGLFSALCYLMLNTPLLFSVNA. The Ig-like V-type domain maps to 26 to 142; it reads TFTEVPKDVT…DETQEHKAQA (117 aa). The Extracellular portion of the chain corresponds to 26–226; it reads TFTEVPKDVT…RQQHGSGTGP (201 aa). Cysteine 46 and cysteine 125 are oxidised to a cystine. Residues 157–213 are disordered; the sequence is AAEAVSHIQSSGPRRNNPSSRATPEPGNKRAVPPAENLAPSLSTAASSSASPAPGKA. 2 stretches are compositionally biased toward low complexity: residues 166-177 and 195-213; these read SSGPRRNNPSSR and APSL…PGKA. The chain crosses the membrane as a helical span at residues 227–247; the sequence is IFANDPALYMFLLIFHQLVYL. Topologically, residues 248–251 are cytoplasmic; sequence LLNH.

The protein localises to the membrane. The protein is V-set and transmembrane domain-containing protein 2B (vstm2b) of Xenopus tropicalis (Western clawed frog).